Here is a 425-residue protein sequence, read N- to C-terminus: MTMAKLTESMTNVLEGDSMDQDVESPVAIHQPKLPKQARDDLPRHISRDRTKRKIQRYVRKDGKCNVHHGNVRETYRYLTDILTTLVDLKWRFNLLIFVMVYTVTWLFFGMIWWLIAYIRGDMDHVEDPSWTPCVTNLNGFVSAFLFSIETETTIGYGYRVITDKCPEGIILLLIQSVLGSIVNAFMVGCMFVKISQPKKRAETLVFSTHAVISMRDGKLCLMFRVGDLRNSHIVEASIRAKLIKSKQTSEGEFIPLNQTDINVGYYTGDDRLFLVSPLIISHEINQQSPFWEISKAQLPKEELEIVVILEGMVEATGMTCQARSSYITSEILWGYRFTPVLTLEDGFYEVDYNSFHETYETSTPSLSAKELAELANRAELPLSWSVSSKLNQHAELETEEEEKNPEEQTERNGDVANLENESKV.

Over 1–91 (MTMAKLTESM…ILTTLVDLKW (91 aa)) the chain is Cytoplasmic. Residues Ser-18 and Ser-25 each carry the phosphoserine modification. A helical transmembrane segment spans residues 92-116 (RFNLLIFVMVYTVTWLFFGMIWWLI). Residues 117 to 140 (AYIRGDMDHVEDPSWTPCVTNLNG) are Extracellular-facing. The segment at residues 141–152 (FVSAFLFSIETE) is an intramembrane region (helical; Pore-forming). The pore-forming intramembrane region spans 153-159 (TTIGYGY). Residues 154–159 (TIGYGY) carry the Selectivity filter motif. The Extracellular segment spans residues 160-168 (RVITDKCPE). A helical membrane pass occupies residues 169 to 190 (GIILLLIQSVLGSIVNAFMVGC). The Cytoplasmic portion of the chain corresponds to 191 to 425 (MFVKISQPKK…VANLENESKV (235 aa)). A disordered region spans residues 392–425 (NQHAELETEEEEKNPEEQTERNGDVANLENESKV). Positions 422 to 425 (ESKV) match the PDZ-binding motif.

It belongs to the inward rectifier-type potassium channel (TC 1.A.2.1) family. KCNJ6 subfamily. As to quaternary structure, associates with KCNJ3/GIRK1 or KCNJ5/GRIK4 to form a G-protein-activated heteromultimer pore-forming unit. The resulting inward current is much larger. Interacts (via PDZ-binding motif) with SNX27 (via PDZ domain); the interaction is required when endocytosed to prevent degradation in lysosomes and promote recycling to the plasma membrane. In terms of tissue distribution, expressed in insulin-secreting cells and brain.

It localises to the membrane. The enzyme catalyses K(+)(in) = K(+)(out). With respect to regulation, activated by phosphatidylinositol 4,5 biphosphate (PtdIns(4,5)P2). In terms of biological role, inward rectifier potassium channels are characterized by a greater tendency to allow potassium to flow into the cell rather than out of it. Their voltage dependence is regulated by the concentration of extracellular potassium; as external potassium is raised, the voltage range of the channel opening shifts to more positive voltages. The inward rectification is mainly due to the blockage of outward current by internal magnesium. This potassium channel may be involved in the regulation of insulin secretion by glucose and/or neurotransmitters acting through G-protein-coupled receptors. The sequence is that of G protein-activated inward rectifier potassium channel 2 (KCNJ6) from Mesocricetus auratus (Golden hamster).